The following is a 431-amino-acid chain: Histidinol dehydrogenase 1 (431 aa).

Residues tyrosine 127, glutamine 188, and asparagine 211 each contribute to the NAD(+) site. 3 residues coordinate substrate: serine 234, glutamine 256, and histidine 259. Zn(2+) contacts are provided by glutamine 256 and histidine 259. Residues glutamate 324 and histidine 325 each act as proton acceptor in the active site. 4 residues coordinate substrate: histidine 325, aspartate 358, glutamate 412, and histidine 417. A Zn(2+)-binding site is contributed by aspartate 358. Position 417 (histidine 417) interacts with Zn(2+).

The protein belongs to the histidinol dehydrogenase family. The cofactor is Zn(2+).

The enzyme catalyses L-histidinol + 2 NAD(+) + H2O = L-histidine + 2 NADH + 3 H(+). It functions in the pathway amino-acid biosynthesis; L-histidine biosynthesis; L-histidine from 5-phospho-alpha-D-ribose 1-diphosphate: step 9/9. Catalyzes the sequential NAD-dependent oxidations of L-histidinol to L-histidinaldehyde and then to L-histidine. The protein is Histidinol dehydrogenase 1 of Trichormus variabilis (strain ATCC 29413 / PCC 7937) (Anabaena variabilis).